We begin with the raw amino-acid sequence, 369 residues long: 3-isopropylmalate dehydrogenase (369 aa).

The substrate site is built by Arg98, Arg108, Arg136, and Asp227. Mg(2+) is bound by residues Asp227, Asp251, and Asp255. 290–302 (GSAPDIAGKGIAN) is an NAD(+) binding site.

Belongs to the isocitrate and isopropylmalate dehydrogenases family. LeuB type 1 subfamily. As to quaternary structure, homodimer. It depends on Mg(2+) as a cofactor. Requires Mn(2+) as cofactor.

It is found in the cytoplasm. The catalysed reaction is (2R,3S)-3-isopropylmalate + NAD(+) = 4-methyl-2-oxopentanoate + CO2 + NADH. The protein operates within amino-acid biosynthesis; L-leucine biosynthesis; L-leucine from 3-methyl-2-oxobutanoate: step 3/4. Functionally, catalyzes the oxidation of 3-carboxy-2-hydroxy-4-methylpentanoate (3-isopropylmalate) to 3-carboxy-4-methyl-2-oxopentanoate. The product decarboxylates to 4-methyl-2 oxopentanoate. The polypeptide is 3-isopropylmalate dehydrogenase (Gluconobacter oxydans (strain 621H) (Gluconobacter suboxydans)).